The primary structure comprises 316 residues: Apolipoprotein E (316 aa).

The first 18 residues, 1-18 (MKALWAVLVVTLLAGCLA), serve as a signal peptide directing secretion. 8 repeat units span residues 76–97 (VLMEDTMTELKAYKKELEEQMG), 98–119 (PMAEETRARLAKEVQAAQSRLG), 120–141 (ADMEDLRNRLGLYRNEVQTMLG), 142–163 (QSTEELRARLTTHLRKLRKRLM), 164–185 (RDAEDLQKRLAVYKAGAREGAE), 186–207 (RGVGAIRERLGPLVEQGRQRTA), 208–229 (NLGAGAAQPLRERAQALGARIR), and 230–251 (GRLEEVGNQARDRLEEVREQME). The interval 76 to 251 (VLMEDTMTEL…RLEEVREQME (176 aa)) is 8 X 22 AA approximate tandem repeats. The residue at position 139 (methionine 139) is a Methionine sulfoxide. Position 143 is a phosphoserine (serine 143). Positions 154–164 (HLRKLRKRLMR) are LDL and other lipoprotein receptors binding. 158 to 161 (LRKR) serves as a coordination point for heparin. Residues 206–286 (TANLGAGAAQ…GWFEPLVEDM (81 aa)) are lipid-binding and lipoprotein association. 225–232 (GARIRGRL) contributes to the heparin binding site. Residues 262-316 (QQMRLQAEIFQTRLKGWFEPLVEDMQRQWANLMEKIQASVATNPIPPSSVPQESQ) form a homooligomerization region. The segment at 274–286 (RLKGWFEPLVEDM) is specificity for association with VLDL.

This sequence belongs to the apolipoprotein A1/A4/E family. As to quaternary structure, homotetramer. May interact with ABCA1; functionally associated with ABCA1 in the biogenesis of HDLs. May interact with APP/A4 amyloid-beta peptide; the interaction is extremely stable in vitro but its physiological significance is unclear. May interact with MAPT. May interact with MAP2. In the cerebrospinal fluid, interacts with secreted SORL1. Interacts with PMEL; this allows the loading of PMEL luminal fragment on ILVs to induce fibril nucleation. APOE exists as multiple glycosylated and sialylated glycoforms within cells and in plasma. The extent of glycosylation and sialylation are tissue and context specific. Post-translationally, glycated in plasma VLDL. In terms of processing, phosphorylated by FAM20C in the extracellular medium.

The protein localises to the secreted. The protein resides in the extracellular space. Its subcellular location is the extracellular matrix. It localises to the extracellular vesicle. It is found in the endosome. The protein localises to the multivesicular body. Functionally, APOE is an apolipoprotein, a protein associating with lipid particles, that mainly functions in lipoprotein-mediated lipid transport between organs via the plasma and interstitial fluids. APOE is a core component of plasma lipoproteins and is involved in their production, conversion and clearance. Apolipoproteins are amphipathic molecules that interact both with lipids of the lipoprotein particle core and the aqueous environment of the plasma. As such, APOE associates with chylomicrons, chylomicron remnants, very low density lipoproteins (VLDL) and intermediate density lipoproteins (IDL) but shows a preferential binding to high-density lipoproteins (HDL). It also binds a wide range of cellular receptors including the LDL receptor/LDLR, the LDL receptor-related proteins LRP1, LRP2 and LRP8 and the very low-density lipoprotein receptor/VLDLR that mediate the cellular uptake of the APOE-containing lipoprotein particles. Finally, APOE also has a heparin-binding activity and binds heparan-sulfate proteoglycans on the surface of cells, a property that supports the capture and the receptor-mediated uptake of APOE-containing lipoproteins by cells. A main function of APOE is to mediate lipoprotein clearance through the uptake of chylomicrons, VLDLs, and HDLs by hepatocytes. APOE is also involved in the biosynthesis by the liver of VLDLs as well as their uptake by peripheral tissues ensuring the delivery of triglycerides and energy storage in muscle, heart and adipose tissues. By participating in the lipoprotein-mediated distribution of lipids among tissues, APOE plays a critical role in plasma and tissues lipid homeostasis. APOE is also involved in two steps of reverse cholesterol transport, the HDLs-mediated transport of cholesterol from peripheral tissues to the liver, and thereby plays an important role in cholesterol homeostasis. First, it is functionally associated with ABCA1 in the biogenesis of HDLs in tissues. Second, it is enriched in circulating HDLs and mediates their uptake by hepatocytes. APOE also plays an important role in lipid transport in the central nervous system, regulating neuron survival and sprouting. The sequence is that of Apolipoprotein E (APOE) from Microtus ochrogaster (Prairie vole).